Reading from the N-terminus, the 362-residue chain is tRNA-specific 2-thiouridylase MnmA 3 (362 aa).

Residues 11-18 and methionine 37 contribute to the ATP site; that span reads GMSGGIDS. The active-site Nucleophile is the cysteine 91. Cysteine 91 and cysteine 188 are oxidised to a cystine. Residue glycine 115 coordinates ATP. An interaction with tRNA region spans residues 137–139; it reads KDQ. The active-site Cysteine persulfide intermediate is cysteine 188. The interval 296–297 is interaction with tRNA; that stretch reads RY.

This sequence belongs to the MnmA/TRMU family.

The protein resides in the cytoplasm. It carries out the reaction S-sulfanyl-L-cysteinyl-[protein] + uridine(34) in tRNA + AH2 + ATP = 2-thiouridine(34) in tRNA + L-cysteinyl-[protein] + A + AMP + diphosphate + H(+). Functionally, catalyzes the 2-thiolation of uridine at the wobble position (U34) of tRNA, leading to the formation of s(2)U34. The sequence is that of tRNA-specific 2-thiouridylase MnmA 3 from Bacteroides fragilis (strain ATCC 25285 / DSM 2151 / CCUG 4856 / JCM 11019 / LMG 10263 / NCTC 9343 / Onslow / VPI 2553 / EN-2).